Reading from the N-terminus, the 293-residue chain is Elongation factor Ts (293 aa).

Positions 79–82 are involved in Mg(2+) ion dislocation from EF-Tu; the sequence is TDFV.

It belongs to the EF-Ts family.

It localises to the cytoplasm. Functionally, associates with the EF-Tu.GDP complex and induces the exchange of GDP to GTP. It remains bound to the aminoacyl-tRNA.EF-Tu.GTP complex up to the GTP hydrolysis stage on the ribosome. This chain is Elongation factor Ts, found in Bacillus pumilus (strain SAFR-032).